A 984-amino-acid chain; its full sequence is PAX-interacting protein 1 (984 aa).

2 consecutive BRCT domains span residues 8 to 93 and 94 to 183; these read VPEE…GFSP and ESCQ…LYHP. The interaction with PAGR1 stretch occupies residues 94–183; the sequence is ESCQIFFGIT…TRKDEALYHP (90 aa). 2 disordered regions span residues 187-271 and 417-509; these read VYEE…PAEV and QQHL…LFGH. Residues 188 to 208 show a composition bias toward acidic residues; it reads YEEEEEEEEEEEGAGNEEPDS. The segment covering 217-229 has biased composition (low complexity); that stretch reads KSSPASSQEGSPS. A phosphoserine mark is found at serine 227 and serine 235. Positions 424–454 are enriched in pro residues; it reads PYPPPPPHPFPPPPAHPHQFPQPPLQRPQPP. The span at 455-485 shows a compositional bias: low complexity; that stretch reads LQQQQLSHLQQQQLQHLQRLQQMQPTPTAQL. Over residues 486–499 the composition is skewed to pro residues; the sequence is PGPPAQALQPPPPQ. Residues 505–984 form an interaction with TP53BP1 region; that stretch reads PLFGHDPAVE…TLDYESYKFN (480 aa). BRCT domains lie at 516 to 609 and 616 to 704; these read PEEG…RALH and PGGK…TQYG. The short motif at 583 to 600 is the Nuclear localization signal element; the sequence is RKRCITAHWLNTVLKKKK. The tract at residues 750-771 is disordered; it reads KQNEVTNVQPSSKRARIEDIPP. The segment covering 752-761 has biased composition (polar residues); that stretch reads NEVTNVQPSS. 2 consecutive BRCT domains span residues 781 to 862 and 883 to 924; these read TPFV…NYLL and HASP…QPSF.

As to quaternary structure, interacts with the C-terminal transactivation domain of PAX2. Forms a constitutive complex with PAGR1 independently of the MLL2/MLL3 complex. Interacts with TP53BP1 (when phosphorylated at the N-terminus by ATM). Interacts with HLTF. Component of the KMT2 family MLL2/MLL3 complex (also named ASCOM complex), at least composed of the HMTs KMT2D and/or KMT2C, the common subunits ASH2L, RBBP5, WDR5 and DPY30, and the complex type-specific subunits PAXIP1/PTIP, PAGR1, NCOA6 and KDM6A; required for the association of PAGR1 with the MLL2/MLL3 complex. Interacts with NUPR1; this interaction prevents PAXIP1 inhibition of PAX2 transcription factor activity.

It localises to the nucleus matrix. Its subcellular location is the chromosome. Its function is as follows. Involved in DNA damage response and in transcriptional regulation through histone methyltransferase (HMT) complexes. Plays a role in early development. In DNA damage response is required for cell survival after ionizing radiation. In vitro shown to be involved in the homologous recombination mechanism for the repair of double-strand breaks (DSBs). Its localization to DNA damage foci requires RNF8 and UBE2N. Recruits TP53BP1 to DNA damage foci and, at least in particular repair processes, effective DNA damage response appears to require the association with TP53BP1 phosphorylated by ATM at 'Ser-25'. Together with TP53BP1 regulates ATM association. Proposed to recruit PAGR1 to sites of DNA damage and the PAGR1:PAXIP1 complex is required for cell survival in response to DNA damage; the function is probably independent of MLL-containing histone methyltransferase (HMT) complexes. However, this function has been questioned. Promotes ubiquitination of PCNA following UV irradiation and may regulate recruitment of polymerase eta and RAD51 to chromatin after DNA damage. Proposed to be involved in transcriptional regulation by linking MLL-containing histone methyltransferase (HMT) complexes to gene promoters by interacting with promoter-bound transcription factors such as PAX2. Associates with gene promoters that are known to be regulated by KMT2D/MLL2. During immunoglobulin class switching in activated B-cells is involved in trimethylation of histone H3 at 'Lys-4' and in transcription initiation of downstream switch regions at the immunoglobulin heavy-chain (Igh) locus; this function appears to involve the recruitment of MLL-containing HMT complexes. Conflictingly, its function in transcriptional regulation during immunoglobulin class switching is reported to be independent of the MLL2/MLL3 complex. In Bos taurus (Bovine), this protein is PAX-interacting protein 1 (PAXIP1).